The following is an 872-amino-acid chain: Alanine--tRNA ligase (872 aa).

Zn(2+)-binding residues include H567, H571, C669, and H673.

This sequence belongs to the class-II aminoacyl-tRNA synthetase family. It depends on Zn(2+) as a cofactor.

Its subcellular location is the cytoplasm. It catalyses the reaction tRNA(Ala) + L-alanine + ATP = L-alanyl-tRNA(Ala) + AMP + diphosphate. Catalyzes the attachment of alanine to tRNA(Ala) in a two-step reaction: alanine is first activated by ATP to form Ala-AMP and then transferred to the acceptor end of tRNA(Ala). Also edits incorrectly charged Ser-tRNA(Ala) and Gly-tRNA(Ala) via its editing domain. This Streptococcus pyogenes serotype M12 (strain MGAS2096) protein is Alanine--tRNA ligase.